Reading from the N-terminus, the 455-residue chain is Argininosuccinate lyase (455 aa).

This sequence belongs to the lyase 1 family. Argininosuccinate lyase subfamily.

Its subcellular location is the cytoplasm. The catalysed reaction is 2-(N(omega)-L-arginino)succinate = fumarate + L-arginine. Its pathway is amino-acid biosynthesis; L-arginine biosynthesis; L-arginine from L-ornithine and carbamoyl phosphate: step 3/3. The sequence is that of Argininosuccinate lyase from Shewanella baltica (strain OS185).